The following is a 204-amino-acid chain: Large ribosomal subunit protein bL25 (204 aa).

It belongs to the bacterial ribosomal protein bL25 family. CTC subfamily. Part of the 50S ribosomal subunit; part of the 5S rRNA/L5/L18/L25 subcomplex. Contacts the 5S rRNA. Binds to the 5S rRNA independently of L5 and L18.

This is one of the proteins that binds to the 5S RNA in the ribosome where it forms part of the central protuberance. The protein is Large ribosomal subunit protein bL25 of Pseudomonas paraeruginosa (strain DSM 24068 / PA7) (Pseudomonas aeruginosa (strain PA7)).